Here is a 55-residue protein sequence, read N- to C-terminus: Large ribosomal subunit protein bL33 (55 aa).

Belongs to the bacterial ribosomal protein bL33 family.

In Campylobacter fetus subsp. fetus (strain 82-40), this protein is Large ribosomal subunit protein bL33.